Reading from the N-terminus, the 61-residue chain is Ferredoxin-3 (61 aa).

4Fe-4S ferredoxin-type domains are found at residues 2–31 and 32–61; these read YKIT…LQDG and KAVA…VEEN. Residues cysteine 11 and cysteine 17 each contribute to the [3Fe-4S] cluster site. [4Fe-4S] cluster-binding residues include cysteine 21, cysteine 41, cysteine 44, and cysteine 47. Cysteine 51 contacts [3Fe-4S] cluster.

It depends on [3Fe-4S] cluster as a cofactor. [4Fe-4S] cluster is required as a cofactor.

Functionally, ferredoxins are iron-sulfur proteins that transfer electrons in a wide variety of metabolic reactions. This Desulfocurvibacter africanus (Desulfovibrio africanus) protein is Ferredoxin-3.